Here is a 115-residue protein sequence, read N- to C-terminus: Tyrosine-protein phosphatase 24 (115 aa).

The region spanning Trp1–Val115 is the Tyrosine-protein phosphatase domain. Asp83 serves as a coordination point for substrate.

The protein belongs to the protein-tyrosine phosphatase family.

It catalyses the reaction O-phospho-L-tyrosyl-[protein] + H2O = L-tyrosyl-[protein] + phosphate. This Styela plicata (Wrinkled sea squirt) protein is Tyrosine-protein phosphatase 24 (STY-24).